The chain runs to 325 residues: Succinylglutamate desuccinylase (325 aa).

His51, Glu54, and His148 together coordinate Zn(2+). The active site involves Glu211.

This sequence belongs to the AspA/AstE family. Succinylglutamate desuccinylase subfamily. The cofactor is Zn(2+).

It carries out the reaction N-succinyl-L-glutamate + H2O = L-glutamate + succinate. The protein operates within amino-acid degradation; L-arginine degradation via AST pathway; L-glutamate and succinate from L-arginine: step 5/5. Functionally, transforms N(2)-succinylglutamate into succinate and glutamate. This is Succinylglutamate desuccinylase from Photorhabdus laumondii subsp. laumondii (strain DSM 15139 / CIP 105565 / TT01) (Photorhabdus luminescens subsp. laumondii).